The primary structure comprises 749 residues: ATP-dependent RNA helicase rok1 (749 aa).

Disordered regions lie at residues 1–121 (MDAF…EMDE) and 148–182 (NAQT…EQKK). Low complexity predominate over residues 17 to 28 (RAAATSAAQTSR). Residues 44 to 54 (SEADRLLEEKK) are compositionally biased toward basic and acidic residues. A compositionally biased stretch (acidic residues) spans 69–78 (AGSEDEDAAD). The segment covering 98–110 (RHQEQASADKDGD) has biased composition (basic and acidic residues). A compositionally biased stretch (acidic residues) spans 111–120 (SGSEDGSEMD). Over residues 167-178 (AQQEEPKTLTKK) the composition is skewed to basic and acidic residues. The short motif at 192 to 224 (VSFKELRTKYKISRRLAENIAEQGFTVPTEVQL) is the Q motif element. In terms of domain architecture, Helicase ATP-binding spans 241-457 (KPGETVEPDL…KSTIQERKDL (217 aa)). ATP is bound at residue 254–261 (APTGSGKT). The segment at 324–366 (VVERDGDGDSDEKDVLDEDSADSGSDSEDDEQTTDKKTKGKAP) is disordered. Acidic residues predominate over residues 331 to 355 (GDSDEKDVLDEDSADSGSDSEDDEQ). Residues 404–407 (DEAD) carry the DEAD box motif. In terms of domain architecture, Helicase C-terminal spans 497–665 (GLRQLLHPTA…SVQKWLLDSL (169 aa)). The segment at 672-749 (DKKELKKHGV…GDDSWSGLED (78 aa)) is disordered. 2 stretches are compositionally biased toward basic and acidic residues: residues 690 to 699 (SIKDNKEFRQ) and 707 to 716 (GYERRMENKK). Over residues 728–737 (SQPQAPSTGA) the composition is skewed to polar residues.

Belongs to the DEAD box helicase family. DDX52/ROK1 subfamily. Interacts with the U3 snoRNA and is associated with the 90S and 40S pre-ribosomes.

It is found in the nucleus. It localises to the nucleolus. The catalysed reaction is ATP + H2O = ADP + phosphate + H(+). ATP-dependent RNA helicase involved in 40S ribosomal subunit biogenesis. Required for the processing and cleavage of 35S pre-rRNA at sites A0, A1, and A2, leading to mature 18S rRNA. The protein is ATP-dependent RNA helicase rok1 (rok1) of Aspergillus terreus (strain NIH 2624 / FGSC A1156).